The primary structure comprises 1154 residues: Paired amphipathic helix protein pst3 (1154 aa).

Disordered stretches follow at residues 1-71 (MDVM…RSVT) and 91-110 (SGKD…SSSN). Basic and acidic residues predominate over residues 9 to 27 (DSERDNPGDKVETQSDKNH). Composition is skewed to polar residues over residues 32 to 45 (SPSQ…TSLH) and 100 to 110 (QNAEGLSSSSN). Residues 111–181 (RPLDVNDALS…EGFNTFLPSG (71 aa)) form the PAH 1 domain. 2 disordered regions span residues 199–249 (GTPM…STEN) and 321–376 (DNVD…KTSR). Positions 228 to 241 (STSPTDSQPQPSAP) are enriched in low complexity. Positions 252–322 (PRVDFNYAIA…EEFKLFLPDN (71 aa)) constitute a PAH 2 domain. Polar residues-rich tracts occupy residues 323–337 (VDST…QKSP) and 365–376 (AQISRSISKTSR). A PAH 3 domain is found at 403–472 (SPYAATQEEL…LWFSEFIRWS (70 aa)). Residues 797–824 (NSNNTNVSFQTDETQTEDETMSDIHPDD) form a disordered region.

Its subcellular location is the nucleus. This is Paired amphipathic helix protein pst3 (pst3) from Schizosaccharomyces pombe (strain 972 / ATCC 24843) (Fission yeast).